We begin with the raw amino-acid sequence, 131 residues long: Small ribosomal subunit protein uS8 (131 aa).

It belongs to the universal ribosomal protein uS8 family. In terms of assembly, part of the 30S ribosomal subunit. Contacts proteins S5 and S12.

Its function is as follows. One of the primary rRNA binding proteins, it binds directly to 16S rRNA central domain where it helps coordinate assembly of the platform of the 30S subunit. The protein is Small ribosomal subunit protein uS8 of Acidithiobacillus ferrooxidans (strain ATCC 23270 / DSM 14882 / CIP 104768 / NCIMB 8455) (Ferrobacillus ferrooxidans (strain ATCC 23270)).